The chain runs to 976 residues: Synaptonemal complex protein 1 (976 aa).

A Mediates head to head self-assembly of N-terminal ends motif is present at residues 101–111; the sequence is GLSRVYSKLYK. The short motif at 117 to 120 is the Nuclear localization signal element; that stretch reads KKWK. An interaction with SYCE3 region spans residues 206–362; it reads ETRQVYMDLN…CQLTEEKETQ (157 aa). 4 coiled-coil regions span residues 211-316, 391-439, 499-685, and 739-798; these read YMDL…SIEK, LRTE…LKKV, VKDL…VEKA, and EQEQ…KTQT. The segment at 676 to 770 is required for pH-induced assembly of C-terminal ends into antiparallel tetramers; that stretch reads ENLLEEVEKA…LSVKKQLEIE (95 aa). The Nuclear localization signal signature appears at 679 to 682; the sequence is LEEV. The interval 784-976 is DNA-binding; the sequence is NTATLKEKKD…KLKEAEKLFV (193 aa). The short motif at 880-883 is the Nuclear localization signal element; the sequence is KKRK.

In terms of assembly, structural component of synaptonemal complexes. Homotetramer that consists of an N-terminal four-helical bundle that bifurcates into two elongated C-terminal dimeric coiled coils. This tetrameric building block potentially self-assembles into a supramolecular zipper-like lattice to mediate meiotic chromosome synapsis. Self-assembly is likely initiated by local proton density at chromosome axis, which is predicted to trigger antiparallel back to back assembly of adjacent C-terminal ends into tetrameric structures that anchor to chromosomal DNA. Then the N-terminal ends are predicted to undergo cooperative antiparallel head to head assembly at the midline of synaptonemal complexes central element to form a zipper-like lattice between properly aligned homologous chromosomes. The nascent synapsis generated by SYCP1 is stabilized through interaction with central element proteins SYCE1 and SYCE2. Interacts (via tetrameric core) with SYCE3; the interaction remodels SYCP1 homotetramers to 2:1 heterotrimers with SYCE3. SYCP1/SYCE3 heterotrimers form lattice assemblies as part of the mature synaptonemal complex via both lateral and head-to-head interactions. Forms a complex with EWSR1, PRDM9, SYCP3 and REC8; complex formation is dependent of phosphorylated form of REC8 and requires PRDM9 bound to hotspot DNA; EWSR1 joins PRDM9 with the chromosomal axis through REC8. Interacts with SPO16. Testis.

The protein resides in the nucleus. Its subcellular location is the chromosome. The protein localises to the centromere. Major component of the transverse filaments of synaptonemal complexes, formed between homologous chromosomes during meiotic prophase. Required for normal assembly of the central element of the synaptonemal complexes. Required for normal centromere pairing during meiosis. Required for normal meiotic chromosome synapsis during oocyte and spermatocyte development and for normal male and female fertility. This chain is Synaptonemal complex protein 1, found in Homo sapiens (Human).